A 151-amino-acid polypeptide reads, in one-letter code: UPF0178 protein PFLU_5917 (151 aa).

This sequence belongs to the UPF0178 family.

In Pseudomonas fluorescens (strain SBW25), this protein is UPF0178 protein PFLU_5917.